Consider the following 49-residue polypeptide: MAVPKRRVSKTRAAKRRTHYKIKLVKPVKDKDGTWKLPHHVNPTTGEYK.

The protein belongs to the bacterial ribosomal protein bL32 family.

The protein is Large ribosomal subunit protein bL32 of Nitratiruptor sp. (strain SB155-2).